We begin with the raw amino-acid sequence, 62 residues long: Photosystem II reaction center protein Z (62 aa).

The next 2 membrane-spanning stretches (helical) occupy residues 8–28 and 41–61; these read AVFALIATSSILLISVPVVFA and FSGTSLWIGLVFLVGILNSLI.

It belongs to the PsbZ family. As to quaternary structure, PSII is composed of 1 copy each of membrane proteins PsbA, PsbB, PsbC, PsbD, PsbE, PsbF, PsbH, PsbI, PsbJ, PsbK, PsbL, PsbM, PsbT, PsbY, PsbZ, Psb30/Ycf12, at least 3 peripheral proteins of the oxygen-evolving complex and a large number of cofactors. It forms dimeric complexes.

Its subcellular location is the plastid. The protein resides in the chloroplast thylakoid membrane. In terms of biological role, may control the interaction of photosystem II (PSII) cores with the light-harvesting antenna, regulates electron flow through the 2 photosystem reaction centers. PSII is a light-driven water plastoquinone oxidoreductase, using light energy to abstract electrons from H(2)O, generating a proton gradient subsequently used for ATP formation. The sequence is that of Photosystem II reaction center protein Z from Vitis vinifera (Grape).